A 774-amino-acid chain; its full sequence is Ion-translocating oxidoreductase complex subunit C (774 aa).

2 4Fe-4S ferredoxin-type domains span residues 369 to 397 and 407 to 436; these read GEPQEEQSCIRCSACADACPADLLPQQLY and KATTHNIADCIECGACAWVCPSNIPLVQYF. Positions 377, 380, 383, 387, 416, 419, 422, and 426 each coordinate [4Fe-4S] cluster. The tract at residues 602 to 750 is disordered; sequence KLEQQQANAE…EPEEQIDPRK (149 aa).

This sequence belongs to the 4Fe4S bacterial-type ferredoxin family. RnfC subfamily. In terms of assembly, the complex is composed of six subunits: RsxA, RsxB, RsxC, RsxD, RsxE and RsxG. The cofactor is [4Fe-4S] cluster.

The protein resides in the cell inner membrane. Its function is as follows. Part of a membrane-bound complex that couples electron transfer with translocation of ions across the membrane. Required to maintain the reduced state of SoxR. This is Ion-translocating oxidoreductase complex subunit C from Escherichia coli O6:K15:H31 (strain 536 / UPEC).